The following is a 597-amino-acid chain: Probable E3 ubiquitin-protein ligase ARI1 (597 aa).

The tract at residues 119-333 (SQMSCDVCME…IAGHSCGRYQ (215 aa)) is TRIAD supradomain. The Zn(2+) site is built by cysteine 123, cysteine 126, cysteine 140, histidine 142, cysteine 145, cysteine 148, cysteine 167, cysteine 172, cysteine 214, cysteine 220, cysteine 236, cysteine 238, cysteine 243, cysteine 246, histidine 251, cysteine 256, cysteine 283, and cysteine 286. The RING-type 1 zinc-finger motif lies at 123–172 (CDVCMEDLPGDHMTRMDCGHCFCNNCWTEHFTVQINEGQSKRIRCMAHQC). The IBR-type zinc finger occupies 194–256 (AKFDRYLLES…LCQAHSPCSC (63 aa)). The RING-type 2; atypical zinc-finger motif lies at 283–311 (CPKCYKPVEKNGGCNLVRCICGQCFCWLC). Cysteine 296 is a catalytic residue. Zn(2+)-binding residues include cysteine 301, cysteine 303, cysteine 308, cysteine 311, histidine 319, and cysteine 329. A disordered region spans residues 536 to 575 (FQPLDSGTSGVTSRPEQASGSRSSEDTICSSSQKRPKKEG). Residues 540 to 568 (DSGTSGVTSRPEQASGSRSSEDTICSSSQ) show a composition bias toward polar residues.

This sequence belongs to the RBR family. Ariadne subfamily. Zn(2+) is required as a cofactor. Ubiquitous.

The enzyme catalyses [E2 ubiquitin-conjugating enzyme]-S-ubiquitinyl-L-cysteine + [acceptor protein]-L-lysine = [E2 ubiquitin-conjugating enzyme]-L-cysteine + [acceptor protein]-N(6)-ubiquitinyl-L-lysine.. It participates in protein modification; protein ubiquitination. Its function is as follows. Might act as an E3 ubiquitin-protein ligase, or as part of E3 complex, which accepts ubiquitin from specific E2 ubiquitin-conjugating enzymes and then transfers it to substrates. The polypeptide is Probable E3 ubiquitin-protein ligase ARI1 (ARI1) (Arabidopsis thaliana (Mouse-ear cress)).